Reading from the N-terminus, the 185-residue chain is Elongation factor P (185 aa).

It belongs to the elongation factor P family.

The protein localises to the cytoplasm. Its pathway is protein biosynthesis; polypeptide chain elongation. Its function is as follows. Involved in peptide bond synthesis. Stimulates efficient translation and peptide-bond synthesis on native or reconstituted 70S ribosomes in vitro. Probably functions indirectly by altering the affinity of the ribosome for aminoacyl-tRNA, thus increasing their reactivity as acceptors for peptidyl transferase. This is Elongation factor P from Synechococcus sp. (strain JA-2-3B'a(2-13)) (Cyanobacteria bacterium Yellowstone B-Prime).